The sequence spans 376 residues: Chaperone protein DnaJ (376 aa).

Positions 5-70 constitute a J domain; the sequence is DYYEILGVSK…QKRAAYDQYG (66 aa). The CR-type zinc finger occupies 131–209; sequence GVTKEIRIPT…CHGHGRVERS (79 aa). Zn(2+) is bound by residues C144, C147, C161, C164, C183, C186, C197, and C200. CXXCXGXG motif repeat units lie at residues 144–151, 161–168, 183–190, and 197–204; these read CDVCHGSG, CPTCHGSG, CPHCQGRG, and CNKCHGHG.

This sequence belongs to the DnaJ family. In terms of assembly, homodimer. The cofactor is Zn(2+).

The protein localises to the cytoplasm. In terms of biological role, participates actively in the response to hyperosmotic and heat shock by preventing the aggregation of stress-denatured proteins and by disaggregating proteins, also in an autonomous, DnaK-independent fashion. Unfolded proteins bind initially to DnaJ; upon interaction with the DnaJ-bound protein, DnaK hydrolyzes its bound ATP, resulting in the formation of a stable complex. GrpE releases ADP from DnaK; ATP binding to DnaK triggers the release of the substrate protein, thus completing the reaction cycle. Several rounds of ATP-dependent interactions between DnaJ, DnaK and GrpE are required for fully efficient folding. Also involved, together with DnaK and GrpE, in the DNA replication of plasmids through activation of initiation proteins. The polypeptide is Chaperone protein DnaJ (Shigella boydii serotype 18 (strain CDC 3083-94 / BS512)).